A 334-amino-acid polypeptide reads, in one-letter code: Rhomboid-like protein 14, mitochondrial (334 aa).

Residues 1 to 87 (MENFGEGRRS…RLFLSAFYHV (87 aa)) constitute a mitochondrion transit peptide. 4 helical membrane-spanning segments follow: residues 114 to 134 (EFAS…LLLA), 146 to 166 (AYYN…KVVL), 176 to 196 (VYGI…LVQM), and 197 to 217 (FVPN…IIYL). S156 acts as the Nucleophile in catalysis. The active-site Charge relay system is H206. The RanBP2-type zinc finger occupies 273 to 302 (GPGIWRCQSCTYDNSGWLSACEMCGSGRAR).

It belongs to the peptidase S54 family.

It is found in the mitochondrion membrane. In terms of biological role, probable rhomboid-type serine protease that catalyzes intramembrane proteolysis. May function in the heat-shock response pathway. This Arabidopsis thaliana (Mouse-ear cress) protein is Rhomboid-like protein 14, mitochondrial.